Reading from the N-terminus, the 124-residue chain is Large ribosomal subunit protein bL12 (124 aa).

Belongs to the bacterial ribosomal protein bL12 family. In terms of assembly, homodimer. Part of the ribosomal stalk of the 50S ribosomal subunit. Forms a multimeric L10(L12)X complex, where L10 forms an elongated spine to which 2 to 4 L12 dimers bind in a sequential fashion. Binds GTP-bound translation factors.

Its function is as follows. Forms part of the ribosomal stalk which helps the ribosome interact with GTP-bound translation factors. Is thus essential for accurate translation. The chain is Large ribosomal subunit protein bL12 from Phocaeicola vulgatus (strain ATCC 8482 / DSM 1447 / JCM 5826 / CCUG 4940 / NBRC 14291 / NCTC 11154) (Bacteroides vulgatus).